The chain runs to 166 residues: Bud site selection protein 20 (166 aa).

The Nuclear localization signal motif lies at 7-16 (KRYKTKRRTR). The segment at 17 to 31 (DLDLIYNDLSTKESV) is nuclear export signal-like (NES-like). A C2H2-type zinc finger spans residues 49–73 (HYCIHCAKYMETAIALKTHLKGKVH).

Belongs to the ZNF593/BUD20 C2H2-type zinc-finger protein family. In terms of assembly, associates with pre-60S ribosomal particles; released from the pre-60S particle very early in the cytoplasm.

It is found in the nucleus. The protein localises to the cytoplasm. Its function is as follows. Involved in pre-60S ribosomal particles maturation by promoting the nuclear export of the 60S ribosome. Involved in positioning the proximal bud pole signal. This is Bud site selection protein 20 from Saccharomyces cerevisiae (strain ATCC 204508 / S288c) (Baker's yeast).